The sequence spans 677 residues: Beta-galactosidase BgaA (677 aa).

Arginine 112 is a binding site for substrate. Residue cysteine 116 coordinates Zn(2+). Asparagine 150 serves as a coordination point for substrate. The active-site Proton donor is the glutamate 151. Residues cysteine 156, cysteine 158, and cysteine 161 each contribute to the Zn(2+) site. The Nucleophile role is filled by glutamate 309. Residues tryptophan 317 and 357–360 (EKYH) contribute to the substrate site.

This sequence belongs to the glycosyl hydrolase 42 family. Dimer.

The enzyme catalyses Hydrolysis of terminal non-reducing beta-D-galactose residues in beta-D-galactosides.. No activity is lost during treatment with 20 or 100 mM EDTA in Z buffer for 3 hours at 0 degrees Celsius, nor is activity greatly stimulated by the addition of cations. Inhibited by 1 mM zinc and 1 mM copper, the levels of activity decrease to 10% of the untreated control. Nickel, cobalt and manganese at concentrations of 10 mM decrease enzyme activity to either 40% (for nickel and cobalt) or 60% (for manganese) of the activity in untreated controls. No change in enzyme activity in the presence of calcium and magnesium at concentrations up to 50 mM. EDTA-treated enzyme exhibits a slight increase in relative specific activity when it is assayed in the presence of 50 mM NaCl or 50 mM KCl, it does not exhibit enhanced activity at concentrations greater than 250 mM. Maintains between 20 and 40% of activity in the presence of 4 M NaCl or 4 M KCl, and it is more active in the presence of KCl than in the presence of NaCl. Retains 50% of activity in the presence of 3 M KCl or 2.5 M NaCl. Hydrolyzes o-nitrophenyl-beta-D-galactopyranoside (ONPG), p-nitrophenyl-beta-D-galactopyranoside (PNPG), 5-bromo-4-chloro-3-indoyl-beta-D-galactosde (X-gal), o-nitrophenyl-beta-D-fucopyranoside (ONPF) and p-nitrophenyl-beta-D-fucopyranoside (PNPF) with greatest activity towards ONPG and PNPG and low levels of activity with ONPF and PNPF. Detectable, but very low levels of activity towards p-nitrophenyl-beta-lactose (PNPL), p-nitrophenyl-beta-cellobiose (PNPC), p-nitrophenyl-alpha-galactopyranoside (PNP-alpha-G), and p-nitrophenyl-beta-xylopyranoside (PNPX). The protein is Beta-galactosidase BgaA of Planococcus sp. (strain 'SOS Orange').